Consider the following 49-residue polypeptide: Small, acid-soluble spore protein O (49 aa).

The interval 24–49 (GYNEEFSNEPLTEAQRQNNKKRKKNQ) is disordered.

This sequence belongs to the SspO family.

It is found in the spore core. This is Small, acid-soluble spore protein O from Geobacillus kaustophilus (strain HTA426).